The sequence spans 520 residues: Macrophage receptor MARCO (520 aa).

Topologically, residues 1-43 are cytoplasmic; it reads MRNKKILKEDELLSETQQAAFHQIAMEPFEINVPKPKRRNGVN. The chain crosses the membrane as a helical; Signal-anchor for type II membrane protein span at residues 44–64; it reads FSLAVVVIYLILLTAGAGLLV. The Extracellular portion of the chain corresponds to 65–520; that stretch reads VQVLNLQARL…EEDAGVECSV (456 aa). N-linked (GlcNAc...) asparagine glycosylation is found at Asn83 and Asn136. A disordered region spans residues 142–423; sequence GMFRIKGEQG…KGERGENSVS (282 aa). Residues 147–419 enclose the Collagen-like domain; sequence KGEQGAPGLQ…VKGEKGERGE (273 aa). 3 stretches are compositionally biased toward low complexity: residues 203-227, 290-345, and 380-398; these read EAGL…PQGE, LAGF…PGAT, and SPGL…QKGD. The span at 410–419 shows a compositional bias: basic and acidic residues; sequence VKGEKGERGE. The SRCR domain occupies 424–519; that stretch reads VRIVGSSNRG…HEEDAGVECS (96 aa). 3 disulfides stabilise this stretch: Cys447–Cys508, Cys460–Cys518, and Cys488–Cys498.

As to quaternary structure, homotrimer; disulfide-linked. Trimers may assemble in larger oligomers thus resulting in the creation of a large surface capable of interacting with very large ligands. N-glycosylated. In terms of tissue distribution, expressed in alveolar macrophages (at protein level). Detected in macrophages from various tissues including thymus, kidney, Kupffer cells of liver, and spleen.

Its subcellular location is the cell membrane. In terms of biological role, pattern recognition receptor (PRR) which binds Gram-positive and Gram-negative bacteria. Also plays a role in binding of unopsonized particles by alveolar macrophages. Binds to the secretoglobin SCGB3A2. The protein is Macrophage receptor MARCO (MARCO) of Homo sapiens (Human).